The following is a 313-amino-acid chain: Adhesin MafA 2 (313 aa).

Residues Met-1 to Ala-14 form the signal peptide. A lipid anchor (N-palmitoyl cysteine) is attached at Cys-15. Cys-15 carries S-diacylglycerol cysteine lipidation. Over residues Gly-282 to Gly-297 the composition is skewed to polar residues. Residues Gly-282–Gly-313 are disordered.

It belongs to the MafA family.

It is found in the cell outer membrane. The protein is Adhesin MafA 2 (mafA2) of Neisseria meningitidis serogroup A / serotype 4A (strain DSM 15465 / Z2491).